Consider the following 470-residue polypeptide: 3-isopropylmalate dehydratase large subunit (470 aa).

Residues C346, C406, and C409 each contribute to the [4Fe-4S] cluster site.

Belongs to the aconitase/IPM isomerase family. LeuC type 1 subfamily. Heterodimer of LeuC and LeuD. It depends on [4Fe-4S] cluster as a cofactor.

The enzyme catalyses (2R,3S)-3-isopropylmalate = (2S)-2-isopropylmalate. Its pathway is amino-acid biosynthesis; L-leucine biosynthesis; L-leucine from 3-methyl-2-oxobutanoate: step 2/4. In terms of biological role, catalyzes the isomerization between 2-isopropylmalate and 3-isopropylmalate, via the formation of 2-isopropylmaleate. The chain is 3-isopropylmalate dehydratase large subunit from Shouchella clausii (strain KSM-K16) (Alkalihalobacillus clausii).